The chain runs to 623 residues: Chaperone protein HtpG (623 aa).

An a; substrate-binding region spans residues 1 to 336 (MVSKQQTMGF…ASDLPLNISR (336 aa)). A b region spans residues 337 to 550 (EILQDNKQVE…EQDMGLEMQR (214 aa)). Residues 551–623 (ILQAAGQQIP…NRVNRLLVSS (73 aa)) form a c region.

Belongs to the heat shock protein 90 family. As to quaternary structure, homodimer.

The protein localises to the cytoplasm. In terms of biological role, molecular chaperone. Has ATPase activity. The sequence is that of Chaperone protein HtpG from Legionella pneumophila (strain Lens).